We begin with the raw amino-acid sequence, 369 residues long: sn-glycerol-3-phosphate import ATP-binding protein UgpC 1 (369 aa).

In terms of domain architecture, ABC transporter spans 4-234 (ISIRGVKKNY…PVSRFVAGFV (231 aa)). Position 36–43 (36–43 (GPSGCGKS)) interacts with ATP.

The protein belongs to the ABC transporter superfamily. sn-glycerol-3-phosphate importer (TC 3.A.1.1.3) family. In terms of assembly, the complex is composed of two ATP-binding proteins (UgpC), two transmembrane proteins (UgpA and UgpE) and a solute-binding protein (UgpB).

It localises to the cell inner membrane. It carries out the reaction sn-glycerol 3-phosphate(out) + ATP + H2O = sn-glycerol 3-phosphate(in) + ADP + phosphate + H(+). Its function is as follows. Part of the ABC transporter complex UgpBAEC involved in sn-glycerol-3-phosphate (G3P) import. Responsible for energy coupling to the transport system. The sequence is that of sn-glycerol-3-phosphate import ATP-binding protein UgpC 1 from Rhizobium johnstonii (strain DSM 114642 / LMG 32736 / 3841) (Rhizobium leguminosarum bv. viciae).